The sequence spans 332 residues: Transaldolase (332 aa).

Catalysis depends on K135, which acts as the Schiff-base intermediate with substrate.

This sequence belongs to the transaldolase family. Type 1 subfamily. As to quaternary structure, homodimer.

It is found in the cytoplasm. The catalysed reaction is D-sedoheptulose 7-phosphate + D-glyceraldehyde 3-phosphate = D-erythrose 4-phosphate + beta-D-fructose 6-phosphate. It functions in the pathway carbohydrate degradation; pentose phosphate pathway; D-glyceraldehyde 3-phosphate and beta-D-fructose 6-phosphate from D-ribose 5-phosphate and D-xylulose 5-phosphate (non-oxidative stage): step 2/3. In terms of biological role, transaldolase is important for the balance of metabolites in the pentose-phosphate pathway. This chain is Transaldolase, found in Prochlorococcus marinus (strain NATL1A).